The primary structure comprises 338 residues: D-erythrose-4-phosphate dehydrogenase (338 aa).

Position 12–13 (12–13 (RI)) interacts with NAD(+). Residues 154–156 (SCT), R200, 213–214 (TK), and R236 each bind substrate. The Nucleophile role is filled by C155. N318 serves as a coordination point for NAD(+).

Belongs to the glyceraldehyde-3-phosphate dehydrogenase family. Epd subfamily. In terms of assembly, homotetramer.

It localises to the cytoplasm. The catalysed reaction is D-erythrose 4-phosphate + NAD(+) + H2O = 4-phospho-D-erythronate + NADH + 2 H(+). It participates in cofactor biosynthesis; pyridoxine 5'-phosphate biosynthesis; pyridoxine 5'-phosphate from D-erythrose 4-phosphate: step 1/5. Functionally, catalyzes the NAD-dependent conversion of D-erythrose 4-phosphate to 4-phosphoerythronate. In Pectobacterium carotovorum subsp. carotovorum (strain PC1), this protein is D-erythrose-4-phosphate dehydrogenase.